The following is a 486-amino-acid chain: Ribulose bisphosphate carboxylase large chain (486 aa).

Residues N126 and T176 each coordinate substrate. The active-site Proton acceptor is the K178. Substrate is bound at residue K180. The Mg(2+) site is built by K204, D206, and E207. The residue at position 204 (K204) is an N6-carboxylysine. Catalysis depends on H296, which acts as the Proton acceptor. Positions 297, 329, and 381 each coordinate substrate.

This sequence belongs to the RuBisCO large chain family. Type I subfamily. As to quaternary structure, heterohexadecamer of 8 large chains and 8 small chains. Mg(2+) is required as a cofactor.

It carries out the reaction 2 (2R)-3-phosphoglycerate + 2 H(+) = D-ribulose 1,5-bisphosphate + CO2 + H2O. The catalysed reaction is D-ribulose 1,5-bisphosphate + O2 = 2-phosphoglycolate + (2R)-3-phosphoglycerate + 2 H(+). In terms of biological role, ruBisCO catalyzes two reactions: the carboxylation of D-ribulose 1,5-bisphosphate, the primary event in carbon dioxide fixation, as well as the oxidative fragmentation of the pentose substrate. Both reactions occur simultaneously and in competition at the same active site. This chain is Ribulose bisphosphate carboxylase large chain, found in Rhizobium meliloti (strain 1021) (Ensifer meliloti).